The following is a 181-amino-acid chain: Coatomer subunit zeta-3 (181 aa).

Belongs to the adaptor complexes small subunit family. In terms of assembly, oligomeric complex that consists of at least the alpha, beta, beta', gamma, delta, epsilon and zeta subunits.

It localises to the cytoplasm. The protein resides in the golgi apparatus membrane. It is found in the cytoplasmic vesicle. The protein localises to the COPI-coated vesicle membrane. Its function is as follows. The coatomer is a cytosolic protein complex that binds to dilysine motifs and reversibly associates with Golgi non-clathrin-coated vesicles, which further mediate biosynthetic protein transport from the ER, via the Golgi up to the trans Golgi network. Coatomer complex is required for budding from Golgi membranes, and is essential for the retrograde Golgi-to-ER transport of dilysine-tagged proteins. The zeta subunit may be involved in regulating the coat assembly and, hence, the rate of biosynthetic protein transport due to its association-dissociation properties with the coatomer complex. This is Coatomer subunit zeta-3 from Arabidopsis thaliana (Mouse-ear cress).